We begin with the raw amino-acid sequence, 139 residues long: Asp-hemolysin (139 aa).

The propeptide occupies 1–5 (MASVQ). A disordered region spans residues 47-79 (TSEDVQQKTAPPGGSVNVNSCGRSDASSGTTGG). The segment covering 62 to 75 (VNVNSCGRSDASSG) has biased composition (polar residues).

The protein belongs to the aegerolysin family.

In Aspergillus fumigatus (strain ATCC MYA-4609 / CBS 101355 / FGSC A1100 / Af293) (Neosartorya fumigata), this protein is Asp-hemolysin.